Here is a 538-residue protein sequence, read N- to C-terminus: Phosphoenolpyruvate carboxykinase (ATP) (538 aa).

Arginine 64 is a binding site for substrate. Position 152 (arginine 152) interacts with ATP. Tyrosine 205 and lysine 211 together coordinate substrate. Residues lysine 211, histidine 230, and 246–254 (GLSGTGKTT) each bind ATP. Residues lysine 211 and histidine 230 each coordinate Mn(2+). Aspartate 267 contributes to the Mn(2+) binding site. ATP contacts are provided by residues glutamate 295, arginine 331, arginine 344, 447-448 (RI), and threonine 453. A substrate-binding site is contributed by arginine 331.

The protein belongs to the phosphoenolpyruvate carboxykinase (ATP) family. As to quaternary structure, monomer. Mn(2+) is required as a cofactor.

Its subcellular location is the cytoplasm. The catalysed reaction is oxaloacetate + ATP = phosphoenolpyruvate + ADP + CO2. Its pathway is carbohydrate biosynthesis; gluconeogenesis. Functionally, involved in gluconeogenesis. Catalyzes the conversion of oxaloacetate (OAA) to phosphoenolpyruvate (PEP) through direct phosphoryl transfer between the nucleoside triphosphate and OAA. The sequence is that of Phosphoenolpyruvate carboxykinase (ATP) from Actinobacillus succinogenes (strain ATCC 55618 / DSM 22257 / CCUG 43843 / 130Z).